The chain runs to 127 residues: Protein ApaG (127 aa).

Residues 3–127 enclose the ApaG domain; it reads ESEKYRIEVE…FMLAMPRVLH (125 aa).

In Aromatoleum aromaticum (strain DSM 19018 / LMG 30748 / EbN1) (Azoarcus sp. (strain EbN1)), this protein is Protein ApaG.